The primary structure comprises 216 residues: Peptide methionine sulfoxide reductase MsrA (216 aa).

The active site involves Cys57.

This sequence belongs to the MsrA Met sulfoxide reductase family.

The enzyme catalyses L-methionyl-[protein] + [thioredoxin]-disulfide + H2O = L-methionyl-(S)-S-oxide-[protein] + [thioredoxin]-dithiol. The catalysed reaction is [thioredoxin]-disulfide + L-methionine + H2O = L-methionine (S)-S-oxide + [thioredoxin]-dithiol. Has an important function as a repair enzyme for proteins that have been inactivated by oxidation. Catalyzes the reversible oxidation-reduction of methionine sulfoxide in proteins to methionine. In Agrobacterium fabrum (strain C58 / ATCC 33970) (Agrobacterium tumefaciens (strain C58)), this protein is Peptide methionine sulfoxide reductase MsrA.